Here is a 475-residue protein sequence, read N- to C-terminus: Ribulose bisphosphate carboxylase large chain (475 aa).

The propeptide occupies 1 to 2 (MV). Residue P3 is modified to N-acetylproline. An N6,N6,N6-trimethyllysine modification is found at K14. Substrate contacts are provided by N123 and T173. K175 serves as the catalytic Proton acceptor. K177 contributes to the substrate binding site. Mg(2+) is bound by residues K201, D203, and E204. K201 is modified (N6-carboxylysine). H294 (proton acceptor) is an active-site residue. Residues R295, H327, and S379 each contribute to the substrate site.

It belongs to the RuBisCO large chain family. Type I subfamily. Heterohexadecamer of 8 large chains and 8 small chains. Requires Mg(2+) as cofactor.

It localises to the plastid. Its subcellular location is the chloroplast. The catalysed reaction is 2 (2R)-3-phosphoglycerate + 2 H(+) = D-ribulose 1,5-bisphosphate + CO2 + H2O. It catalyses the reaction D-ribulose 1,5-bisphosphate + O2 = 2-phosphoglycolate + (2R)-3-phosphoglycerate + 2 H(+). Its function is as follows. RuBisCO catalyzes two reactions: the carboxylation of D-ribulose 1,5-bisphosphate, the primary event in carbon dioxide fixation, as well as the oxidative fragmentation of the pentose substrate in the photorespiration process. Both reactions occur simultaneously and in competition at the same active site. The protein is Ribulose bisphosphate carboxylase large chain of Stigeoclonium helveticum (Green alga).